We begin with the raw amino-acid sequence, 995 residues long: Beta-agarase A (995 aa).

The first 20 residues, 1 to 20 (MKIKFLSAAIAASLALPLSA), serve as a signal peptide directing secretion. The segment at 936-972 (GTNIGVSHSGPEAPDPGEPVDPPIDPPTPPTGGVTGG) is disordered. Pro residues predominate over residues 948–965 (APDPGEPVDPPIDPPTPP).

It belongs to the glycosyl hydrolase 50 family.

It catalyses the reaction Hydrolysis of (1-&gt;4)-beta-D-galactosidic linkages in agarose, giving the tetramer as the predominant product.. In terms of biological role, hydrolyzes agarose and also neoagarotetraose to yield neoagarobiose. The chain is Beta-agarase A (agaA) from Vibrio sp. (strain JT0107).